Reading from the N-terminus, the 150-residue chain is Transcriptional repressor NrdR (150 aa).

A zinc finger spans residues 3–34; sequence CPFCQHDHSKVIDSRVIDAGSAIRRRRECSKC. One can recognise an ATP-cone domain in the interval 46–136; the sequence is LLVVKRNGVT…VYKSFDSADD (91 aa).

The protein belongs to the NrdR family. It depends on Zn(2+) as a cofactor.

In terms of biological role, negatively regulates transcription of bacterial ribonucleotide reductase nrd genes and operons by binding to NrdR-boxes. The chain is Transcriptional repressor NrdR from Corynebacterium glutamicum (strain ATCC 13032 / DSM 20300 / JCM 1318 / BCRC 11384 / CCUG 27702 / LMG 3730 / NBRC 12168 / NCIMB 10025 / NRRL B-2784 / 534).